The primary structure comprises 157 residues: Alanyl-tRNA editing protein AlaX-S (157 aa).

His9, His13, Cys116, and His120 together coordinate Zn(2+).

Belongs to the class-II aminoacyl-tRNA synthetase family. Editing domain AlaX-S subfamily. Monomer and homodimer; the dimer is less active in tRNA editing and does not have a zinc ion associated with it. Another report shows only a monomeric form. Zn(2+) serves as cofactor.

Its subcellular location is the cytoplasm. In terms of biological role, functions in trans to edit the amino acid moiety from mischarged charged Ser-tRNA(Ala). Has little activity against Gly-tRNA(Ala). The protein is Alanyl-tRNA editing protein AlaX-S (alaXS) of Pyrococcus horikoshii (strain ATCC 700860 / DSM 12428 / JCM 9974 / NBRC 100139 / OT-3).